The chain runs to 96 residues: Large ribosomal subunit protein eL21 (96 aa).

The tract at residues 1–37 is disordered; it reads MPSSNGPMTGTRDKLSNSPRERGMSPPQRAIQEYDEG. Positions 11 to 23 are enriched in basic and acidic residues; that stretch reads TRDKLSNSPRERG.

This sequence belongs to the eukaryotic ribosomal protein eL21 family.

The protein is Large ribosomal subunit protein eL21 of Haloquadratum walsbyi (strain DSM 16790 / HBSQ001).